Here is a 186-residue protein sequence, read N- to C-terminus: UPF0301 protein NTHI0415 (186 aa).

This sequence belongs to the UPF0301 (AlgH) family.

The sequence is that of UPF0301 protein NTHI0415 from Haemophilus influenzae (strain 86-028NP).